The sequence spans 177 residues: Nucleoside triphosphate/diphosphate phosphatase (177 aa).

Residue arginine 23 is the Proton donor of the active site. Mg(2+)-binding residues include asparagine 87, aspartate 103, aspartate 105, aspartate 107, aspartate 120, and glutamate 123.

The protein belongs to the Ntdp family. Mg(2+) is required as a cofactor.

The enzyme catalyses a ribonucleoside 5'-triphosphate + H2O = a ribonucleoside 5'-diphosphate + phosphate + H(+). The catalysed reaction is a ribonucleoside 5'-diphosphate + H2O = a ribonucleoside 5'-phosphate + phosphate + H(+). In terms of biological role, has nucleoside phosphatase activity towards nucleoside triphosphates and nucleoside diphosphates. The chain is Nucleoside triphosphate/diphosphate phosphatase from Streptococcus agalactiae serotype Ia (strain ATCC 27591 / A909 / CDC SS700).